The following is a 201-amino-acid chain: FMN-dependent NADH:quinone oxidoreductase (201 aa).

FMN is bound by residues Ser9 and 93 to 96 (MYNF).

The protein belongs to the azoreductase type 1 family. As to quaternary structure, homodimer. It depends on FMN as a cofactor.

It catalyses the reaction 2 a quinone + NADH + H(+) = 2 a 1,4-benzosemiquinone + NAD(+). It carries out the reaction N,N-dimethyl-1,4-phenylenediamine + anthranilate + 2 NAD(+) = 2-(4-dimethylaminophenyl)diazenylbenzoate + 2 NADH + 2 H(+). Quinone reductase that provides resistance to thiol-specific stress caused by electrophilic quinones. Its function is as follows. Also exhibits azoreductase activity. Catalyzes the reductive cleavage of the azo bond in aromatic azo compounds to the corresponding amines. The protein is FMN-dependent NADH:quinone oxidoreductase of Bradyrhizobium sp. (strain BTAi1 / ATCC BAA-1182).